The following is a 1167-amino-acid chain: MSDDYDPTNINAASWEEQEDYGEADGSEQYGEAEGSEQQDIQHSSEHQEAEYSVESNPNDLGDHPSQDGNTDDVGDDYDPASVVTSSVPAPPSAPAQEDSKTAPQPAAPVAKKPRTAGGFLVGDSDDEDEDGDDDGEPQQQQQQQQQQQPHQVVHKETGSGASSSGGSAPAPASASATAAPQSHSPAPQTATLTVQDNAGATTFNAPPVPQQVSHQSGATTAAVPTTPSSAAPAVDPTPVTQPAPDRVAIYEDQIRDDPRGAMNAWLELMKEKRARNDIDGARQVYERFLAIFPQAADIWVEYLDLELSLNNFPQAEGIFAKCLMTTPNVNLWTRYLDYIRRRNDLNDSTGQARQTVSQAYEFVIDNIGLDKDSGKIWAEYIQFIKFGPGTVGGSQWQDQQKMDQLRKAYQRAICVPISNVNTLWKEYDQFEMGLNKLTGRKYLSEKSPSYMSAKSANTALEHITRGLNRTNLPRLPPAPGFDGDQEFMEQVEIWKKWIAWEKSDPLDLKDDKDQPGLYQKRILYVYNQALMALRFWPEMWVDAAQWCFDNNITTVENKVTKDGNANGVEFLIRGIEANPESVLLAFKHADHIESTYPIEENDEAKIQRGEAVKAPYNKVLDTLYAMIKSLKEKEAAQIAKLQEMTAAQESKAGSDNEDGDGAADNIKKAPIEAIQKGYAAQTQLLSRMISFVWIALIRAMRRVQGKGGLNVPLGGMRKAFHDARARGRLTSDVYAAVAQLEWTIYKDPAGGKIFDRGAKLFPEDENFTLENIKYLHSRDDHTNARVLFETVVNRLTQKPELVHKAKPLYQYFHKYESQFGELAQVTKLEKRMAELFPEDPKLAAFTARYASDKFDPITARIIVSPTTQLRPKNMIMPSIEQQQPQLPMSQRDTPAAGFSPRPQGLKSPSAGPGAPFAPYAAKRPLDDRDYDDHPRKIARSEHDPFVRGASPLKGAAGRRLDQQRRMGGAAGAYSGSGAGSQVAPIARDITFLLSQIPRVEFYDSHRLNPSRMVSLLQNVKVPEYLDWKRERERMQQMQQMQGDGYGGYGGGGGGGGGGGYQGGGHARNISQDYAYRESPGPLGGRPLSPFTGGPGSRLASATAAYRQAPVGRPESSGSYEPPPAAQYGVPPPAQYDGGWAQQQQQQQYGQPPAPQGYRYGNPPPPY.

The disordered stretch occupies residues Met-1–Pro-245. Acidic residues-rich tracts occupy residues Glu-16 to Gly-26 and Asn-70 to Asp-79. Positions Thr-102–Ala-111 are enriched in low complexity. Positions Asp-124–Glu-137 are enriched in acidic residues. Composition is skewed to low complexity over residues Pro-138–Pro-150 and Gly-159–Ala-191. Polar residues predominate over residues Thr-192–Gly-218. The span at Ala-219–Pro-245 shows a compositional bias: low complexity. HAT repeat units follow at residues Asn-277–Ser-309, Asn-311–Arg-342, Gln-352–Phe-387, Gln-401–Gly-434, Thr-471–Ser-504, and Leu-518–Asp-550. The span at Gln-882–Asp-893 shows a compositional bias: polar residues. Disordered regions lie at residues Gln-882–Gly-980 and Ala-1075–Tyr-1167. Residues Ser-908–Ala-922 show a composition bias toward low complexity. A compositionally biased stretch (basic and acidic residues) spans Arg-924–Phe-946. Gly residues predominate over residues Gly-969–Ala-979. Positions Ser-1079 to Pro-1090 are enriched in low complexity. Over residues Glu-1121–Ala-1134 the composition is skewed to pro residues. Residues Gln-1135–Gln-1151 show a composition bias toward low complexity.

The protein resides in the nucleus. The protein localises to the cytoplasm. In terms of biological role, component of the cleavage factor IA (CFIA) complex, which is involved in the endonucleolytic cleavage during polyadenylation-dependent pre-mRNA 3'-end formation. This is mRNA 3'-end-processing protein rna-14 (rna-14) from Neurospora crassa (strain ATCC 24698 / 74-OR23-1A / CBS 708.71 / DSM 1257 / FGSC 987).